We begin with the raw amino-acid sequence, 1701 residues long: Merozoite surface protein 1 (1701 aa).

The N-terminal stretch at 1–19 (MKIIFFLCSFLFFIINTQC) is a signal peptide. Residues 89–100 (GSGGSVASGGSG) are compositionally biased toward gly residues. Residues 89–118 (GSGGSVASGGSGNSRRTNPSDNSSDSNTKT) form a disordered region. A compositionally biased stretch (low complexity) spans 101 to 116 (NSRRTNPSDNSSDSNT). N-linked (GlcNAc...) asparagine glycosylation is found at Asn110 and Asn239. Residues 322 to 344 (DAENPTTGSKPNPLPENKKKEVE) form a disordered region. N-linked (GlcNAc...) asparagine glycosylation is found at Asn470, Asn536, and Asn607. The tract at residues 704–739 (SETTEDGGHSTHTLSQSGETEVTEETEVTEETVGHT) is disordered. A compositionally biased stretch (acidic residues) spans 724-733 (EVTEETEVTE). Asn802, Asn899, Asn919, Asn965, Asn991, Asn1089, and Asn1196 each carry an N-linked (GlcNAc...) asparagine glycan. Residues 889-927 (TGTSSTSSPGNTTVNTAQSATHSNSQNQQSNASSTNTQN) are compositionally biased toward low complexity. Residues 889–936 (TGTSSTSSPGNTTVNTAQSATHSNSQNQQSNASSTNTQNGVAVSSGPA) form a disordered region. Disordered stretches follow at residues 1231 to 1259 (PPQPDVTPSPLSVRVSGSSGSTKEETQIP) and 1451 to 1472 (KEKFPSSPPTTPPSPAKTDEQK). The segment covering 1245-1259 (VSGSSGSTKEETQIP) has biased composition (polar residues). The span at 1456–1465 (SSPPTTPPSP) shows a compositional bias: pro residues. N-linked (GlcNAc...) asparagine glycosylation is present at Asn1588. EGF-like domains are found at residues 1592–1632 (HQCV…VENP) and 1633–1680 (NPTC…IFCS). Cystine bridges form between Cys1594–Cys1605, Cys1599–Cys1615, Cys1617–Cys1628, Cys1636–Cys1649, Cys1643–Cys1663, and Cys1665–Cys1679. Ser1680 is lipidated: GPI-anchor amidated serine. A propeptide spans 1681-1701 (SSNFLGISFLLILMLILYSFI) (removed in mature form).

As to quaternary structure, forms a complex composed of subunits p83, p30, p38, and p42 which remain non-covalently associated; the complex is formed at the merozoite surface prior to egress from host erythrocytes. Forms a complex composed of processed MSP1 subunits, MSP6 subunit p36 and MSP7; the complex is formed at the merozoite surface prior to egress from host erythrocytes. Within the complex, interacts (via subunit p38) with MSP6 subunit p36 and (via subunits p83, p30 and p38) with MSP7 (via subunit p22). Forms a complex composed of MSP1, MSP6, DBLMSP1 and DBLMSP2. Within the complex, interacts (via subunit p38) with DBLMSP1 and DBLMSP2. Forms a complex composed of MSP1, and rhoptry proteins RhopH3, RAP1 and CLAG9/RhopH3. Within the complex, interacts (via subunits p42 and p19) with RhopH3 (via C-terminus). Forms a complex composed of MSP1, MSP6, MSP7, MSP9 and MSP3; within the complex, MSP6 and MSP9 mediate the binding to the host erythrocyte. Interacts (via subunits p19 and p42) with MSP9; the interaction is direct; MSP1 subunits p19 or p42, and MSP9 form a co-ligand complex that interacts with host SLC4A1/Band 3 protein. May interact with PFD6. Interacts with host spectrin. In terms of assembly, interacts with host glycophorin GYPA in a sialic acid-independent manner. Interacts with host proinflammatory cytokine S100P; the interaction blocks S100P inflammatory and chemotactic activities. As to quaternary structure, interacts with host SLC4A1/Band 3 (via 5ABC region) on the host erythrocyte surface in a sialic acid-independent manner. Post-translationally, the p190 precursor is cleaved by SUB1 prior to merozoite egress into 4 subunits p83, p30, p38, and p42 which remain non-covalently associated. SUB1-mediated proteolytic cleavage occurs in an orderly manner; the first cleavage occurs at the p30/p38 site, followed by cleavage at the p83/p30 site, in the 3D7 strain a second cleavage occurs at the N-terminus of p83, the last cleavage occurs at the p38/p42 site. The order of cleavage is essential for parasite viability. SUB1-mediated processing is essential for merozoite egress. In a second processing step during erythrocyte invasion, p42 is cleaved by SUB2 into p33 and p19; the latter remains attached to the merozoite surface via its GPI-anchor and is endocytosed during the subsequent ring stage.

The protein resides in the cell membrane. Its subcellular location is the secreted. The protein localises to the vacuole membrane. Functionally, during the asexual blood stage, involved in merozoite egress from host erythrocytes possibly via its interaction with the host cytoskeleton protein spectrin resulting in the destabilization of the host cytoskeleton and thus leading to erythrocyte cell membrane rupture. Involved in the binding to host erythrocytes and is required for host erythrocyte invasion. In terms of biological role, by binding to host proinflammatory cytokine S100P may interfere with host immune responses. Its function is as follows. Involved in merozoite invasion of host erythrocytes. May play a role in the biogenesis and/or function of the food vacuole during the intraerythrocytic development. The protein is Merozoite surface protein 1 of Plasmodium falciparum (isolate FC27 / Papua New Guinea).